A 63-amino-acid chain; its full sequence is Putative flagellar calcium-binding protein (63 aa).

The span at 1-11 (MGCISSKSTQT) shows a compositional bias: polar residues. The tract at residues 1–23 (MGCISSKSTQTGKKEGKTAAERK) is disordered. Residues 12–23 (GKKEGKTAAERK) show a composition bias toward basic and acidic residues. Residues 40 to 63 (EDKARRIELFKKFDKNNTGKLSME) form the EF-hand domain. Ca(2+)-binding residues include D53, N55, T57, and K59.

This sequence belongs to the calflagin family.

The protein localises to the cell projection. Its subcellular location is the cilium. It is found in the flagellum. This chain is Putative flagellar calcium-binding protein (CABP), found in Crithidia fasciculata.